The chain runs to 500 residues: Cytochrome P450 monooxygenase 103 (500 aa).

The next 2 helical transmembrane spans lie at 1 to 21 (MASTPLLYVLVIILSAVYLLR) and 26 to 46 (PLYAIPAVGPSLPLLSYIGAL). Residue Asn374 is glycosylated (N-linked (GlcNAc...) asparagine). Cys441 provides a ligand contact to heme.

The protein belongs to the cytochrome P450 family. Requires heme as cofactor.

It localises to the membrane. Its pathway is secondary metabolite biosynthesis. Functionally, cytochrome P450 monooxygenase that is able to use testosterone as a substrate for oxidation. The polypeptide is Cytochrome P450 monooxygenase 103 (Postia placenta (strain ATCC 44394 / Madison 698-R) (Brown rot fungus)).